Here is a 292-residue protein sequence, read N- to C-terminus: MAGLDLGTAFRYVNHQLHRPDLHLHHNSSSDDVTPGAGMGHFTVDDEDNNNNHQGLDLASGGGSGSSGGGGGHGGGGDVVGRRPRGRPPGSKNKPKPPVIITRESANTLRAHILEVTNGCDVFDCVATYARRRQRGICVLSGSGTVTNVSIRQPSAAGAVVTLQGTFEILSLSGSFLPPPAPPGATSLTIFLAGGQGQVVGGSVVGELTAAGPVIVIAASFTNVAYERLPLEEDEQQQQLGGGSNGGGNLFPEVAAGGGGGLPFFNLPMNMQPNVQLPVEGWPGNSGGRGPF.

The tract at residues 23–100 (HLHHNSSSDD…SKNKPKPPVI (78 aa)) is disordered. Positions 60 to 79 (SGGGSGSSGGGGGHGGGGDV) are enriched in gly residues. A DNA-binding region (a.T hook) is located at residues 82 to 94 (RRPRGRPPGSKNK). Residues 106–242 (ANTLRAHILE…EDEQQQQLGG (137 aa)) enclose the PPC domain.

Its subcellular location is the nucleus. Transcription factor that specifically binds AT-rich DNA sequences related to the nuclear matrix attachment regions (MARs). The polypeptide is AT-hook motif nuclear-localized protein 23 (Arabidopsis thaliana (Mouse-ear cress)).